Here is a 37-residue protein sequence, read N- to C-terminus: MKRRPRKWKKKGRMRWKWIKKRIRRLKRQRRKERGLI.

The protein belongs to the eukaryotic ribosomal protein eS32 family. As to quaternary structure, part of the small ribosomal subunit.

In terms of biological role, interacts with N(4)-acetylcytidine (ac(4)C) 1459 of the small rRNA; the acetyl group of ac(4)C1459 briges the interaction with this protein. This Thermococcus kodakarensis (strain ATCC BAA-918 / JCM 12380 / KOD1) (Pyrococcus kodakaraensis (strain KOD1)) protein is Small ribosomal subunit protein eS32 (rpl41e).